The following is a 191-amino-acid chain: Ion-translocating oxidoreductase complex subunit B (191 aa).

The hydrophobic stretch occupies residues 1–26; that stretch reads MSAIWIAIAVLSALSLVFGGLLGYAS. The 4Fe-4S domain maps to 32–91; it reads EEDPIVEQIDAILPQSQCGQCGYPGCRPYADAVGNNGEMINKCAPGGEQTMLKLAALLNV. Residues C49, C52, C57, C74, C116, C119, C122, C126, C146, C149, C152, and C156 each coordinate [4Fe-4S] cluster. 2 consecutive 4Fe-4S ferredoxin-type domains span residues 107–136 and 137–166; these read KVAW…GATR and AMHT…MRPV.

It belongs to the 4Fe4S bacterial-type ferredoxin family. RnfB subfamily. In terms of assembly, the complex is composed of six subunits: RnfA, RnfB, RnfC, RnfD, RnfE and RnfG. Requires [4Fe-4S] cluster as cofactor.

The protein localises to the cell inner membrane. Its function is as follows. Part of a membrane-bound complex that couples electron transfer with translocation of ions across the membrane. The polypeptide is Ion-translocating oxidoreductase complex subunit B (Erwinia tasmaniensis (strain DSM 17950 / CFBP 7177 / CIP 109463 / NCPPB 4357 / Et1/99)).